The chain runs to 228 residues: MDKLLLWMSVFTSLLSEAFAQTDLNQKVFVFPRESETDYVKLIPWLEKPLQNFTLCFRAYSDLSRSQSLFSYSVNSRDNELLIYKDKVGQYSLYIGNSKVTVRGLEEFPSPIHFCTSWESSSGIAEFWVNGKPWVKKGLQKGYTVKSSPSIVLGQEQDTYGGGFDKTQSFVGEIADLYMWDSVLTPENIHSVDRGFPPNPNILDWRALNYEINGYVVIKPRMWDNKSS.

The first 20 residues, 1 to 20 (MDKLLLWMSVFTSLLSEAFA), serve as a signal peptide directing secretion. One can recognise a Pentraxin (PTX) domain in the interval 25–224 (NQKVFVFPRE…YVVIKPRMWD (200 aa)). Residue Asn-52 is glycosylated (N-linked (GlcNAc...) asparagine). A disulfide bridge links Cys-56 with Cys-115. The Ca(2+) site is built by Asp-78, Asn-79, Glu-156, Gln-157, Asp-158, and Gln-168.

Belongs to the pentraxin family. Homopentamer. Pentraxin (or pentaxin) have a discoid arrangement of 5 non-covalently bound subunits. Ca(2+) serves as cofactor.

The protein resides in the secreted. This is Serum amyloid P-component (Apcs) from Rattus norvegicus (Rat).